A 70-amino-acid chain; its full sequence is Large ribosomal subunit protein uL29 (70 aa).

Belongs to the universal ribosomal protein uL29 family.

This chain is Large ribosomal subunit protein uL29, found in Clostridium botulinum (strain Eklund 17B / Type B).